The primary structure comprises 121 residues: Putative membrane protein insertion efficiency factor (121 aa).

Belongs to the UPF0161 family.

The protein localises to the cell membrane. Could be involved in insertion of integral membrane proteins into the membrane. The sequence is that of Putative membrane protein insertion efficiency factor from Rhodococcus opacus (strain B4).